The following is a 599-amino-acid chain: Leucine zipper putative tumor suppressor 1 (599 aa).

Gly-2 carries N-myristoyl glycine lipidation. Disordered regions lie at residues 135–190 (GAIL…TTSS) and 288–324 (EFASGQTFEERPRRTRDELECLEPKSKLKPPSQKSQR). Residues 153–162 (PPDKPKEQEL) are compositionally biased toward basic and acidic residues. Polar residues predominate over residues 174–190 (SGRNSMSSLPTHSTTSS). A coiled-coil region spans residues 256–572 (LSTDECTIQE…LEKALQQLAR (317 aa)). A compositionally biased stretch (basic and acidic residues) spans 288 to 313 (EFASGQTFEERPRRTRDELECLEPKS).

This sequence belongs to the LZTS family. In terms of assembly, binds EEF1G, TLK2 and CDK1. Phosphorylated on serine residues. Hyperphosphorylated by the cAMP-dependent kinase PKA during cell-cycle progression.

The protein localises to the cytoplasm. It localises to the cell membrane. The protein resides in the cell projection. It is found in the dendritic spine. Its subcellular location is the postsynaptic density. The protein localises to the synapse. Functionally, involved in the regulation of cell growth. May stabilize the active CDC2-cyclin B1 complex and thereby contribute to the regulation of the cell cycle and the prevention of uncontrolled cell proliferation. May act as tumor suppressor. The polypeptide is Leucine zipper putative tumor suppressor 1 (Lzts1) (Mus musculus (Mouse)).